Here is a 301-residue protein sequence, read N- to C-terminus: Mitochondrial carnitine/acylcarnitine carrier protein (301 aa).

Ala2 is modified (N-acetylalanine). Residues 2–12 lie on the Cytoplasmic side of the membrane; sequence AEEPKPISPLK. Solcar repeat units lie at residues 8–99, 108–196, and 207–293; these read ISPL…GKRL, LTYP…LKNL, and LSVP…PMKI. A helical transmembrane segment spans residues 13–31; that stretch reads NLLAGGFGGVCLVFVGHPL. The Mitochondrial matrix portion of the chain corresponds to 32-73; it reads DTVKVRLQTQPPSLPGQPPMYSGTIDCFRKTLFREGITGLYR. A helical membrane pass occupies residues 74–93; the sequence is GMAAPIIGVTPMFAVCFFGF. The Cytoplasmic segment spans residues 94-112; it reads GLGKRLQQKSPEDELTYPQ. The helical transmembrane segment at 113–131 threads the bilayer; the sequence is LFTAGMLSGVFTTGIMTPG. Over 132-170 the chain is Mitochondrial matrix; it reads ERIKCLLQIQASSGKNKYSGTLDCAKKLYQEFGIRGFYK. Residues Lys148 and Lys157 each carry the N6-acetyllysine modification. Lys170 carries the N6-acetyllysine; alternate modification. Lys170 is modified (N6-succinyllysine; alternate). Residues 171–190 traverse the membrane as a helical segment; that stretch reads GTALTLMRDVPASGMYFMTY. Residues 191–211 are Cytoplasmic-facing; it reads EWLKNLFTPQGKSVHDLSVPR. Residues 212 to 230 traverse the membrane as a helical segment; the sequence is VLVAGGFRGIFNWVVAIPP. Residues 231-267 lie on the Mitochondrial matrix side of the membrane; that stretch reads DVLKSRFQTAPPGKYPNGFRDVLRELIREEGVTSLYK. The chain crosses the membrane as a helical span at residues 268-287; sequence GFNAVMIRAFPANAACFLGF. Residues 288–301 lie on the Cytoplasmic side of the membrane; sequence EIPMKILNWIAPNL.

Belongs to the mitochondrial carrier (TC 2.A.29) family. The N-terminus is blocked.

The protein localises to the mitochondrion inner membrane. The catalysed reaction is O-acetyl-(R)-carnitine(in) + (R)-carnitine(out) = O-acetyl-(R)-carnitine(out) + (R)-carnitine(in). The enzyme catalyses an O-acyl-(R)-carnitine(in) + (R)-carnitine(out) = an O-acyl-(R)-carnitine(out) + (R)-carnitine(in). It carries out the reaction O-propanoyl-(R)-carnitine(in) + (R)-carnitine(out) = O-propanoyl-(R)-carnitine(out) + (R)-carnitine(in). It catalyses the reaction O-hexadecanoyl-(R)-carnitine(in) + (R)-carnitine(out) = O-hexadecanoyl-(R)-carnitine(out) + (R)-carnitine(in). The catalysed reaction is O-octanoyl-(R)-carnitine(in) + (R)-carnitine(out) = O-octanoyl-(R)-carnitine(out) + (R)-carnitine(in). The enzyme catalyses (R)-carnitine(in) = (R)-carnitine(out). In terms of biological role, mediates the electroneutral exchange of acylcarnitines (O-acyl-(R)-carnitine or L-acylcarnitine) of different acyl chain lengths (ranging from O-acetyl-(R)-carnitine to long-chain O-acyl-(R)-carnitines) with free carnitine ((R)-carnitine or L-carnitine) across the mitochondrial inner membrane, via a ping-pong mechanism. Key player in the mitochondrial oxidation pathway, it translocates the fatty acids in the form of acylcarnitines into the mitochondrial matrix, where the carnitine palmitoyltransferase 2 (CPT-2) activates them to undergo fatty acid beta-oxidation. Catalyzes the unidirectional transport (uniport) of carnitine at lower rates than the antiport (exchange). The polypeptide is Mitochondrial carnitine/acylcarnitine carrier protein (Rattus norvegicus (Rat)).